We begin with the raw amino-acid sequence, 438 residues long: Putative permease HI_0125 (438 aa).

13 helical membrane-spanning segments follow: residues 21 to 41, 51 to 71, 73 to 93, 97 to 117, 137 to 157, 167 to 187, 195 to 215, 238 to 258, 296 to 316, 326 to 346, 347 to 367, 386 to 406, and 418 to 438; these read IIAG…VPNM, SVFI…GLWA, APMA…SLVI, VAIP…TLIS, AGIG…GLVV, LGDF…LIIG, GGIL…DPNV, FMGA…MTAV, LFSG…AAGT, AIVV…AFLV, PGYA…SNVS, FIVL…ALVI, and NVGT…GWAI. An ATP-binding site is contributed by 315-322; it reads GTAAGGKT.

The protein belongs to the nucleobase:cation symporter-2 (NCS2) (TC 2.A.40) family. Azg-like subfamily.

It localises to the cell membrane. This is Putative permease HI_0125 from Haemophilus influenzae (strain ATCC 51907 / DSM 11121 / KW20 / Rd).